We begin with the raw amino-acid sequence, 211 residues long: Glycerol-3-phosphate acyltransferase (211 aa).

5 helical membrane-spanning segments follow: residues 5–25, 58–78, 80–100, 112–132, and 138–158; these read ALGMMLIAYLCGSVSSAILFC, VLVFDILKGMLPVWGAYALGV, PLYLGLTAIAACLGHIYPVFF, LGAIAPIGLDLTGLMTGTWLL, and GYSSLGAIVSALIAPFYVWWF.

It belongs to the PlsY family. Probably interacts with PlsX.

The protein localises to the cell inner membrane. The catalysed reaction is an acyl phosphate + sn-glycerol 3-phosphate = a 1-acyl-sn-glycero-3-phosphate + phosphate. It participates in lipid metabolism; phospholipid metabolism. Its function is as follows. Catalyzes the transfer of an acyl group from acyl-phosphate (acyl-PO(4)) to glycerol-3-phosphate (G3P) to form lysophosphatidic acid (LPA). This enzyme utilizes acyl-phosphate as fatty acyl donor, but not acyl-CoA or acyl-ACP. This chain is Glycerol-3-phosphate acyltransferase, found in Pectobacterium atrosepticum (strain SCRI 1043 / ATCC BAA-672) (Erwinia carotovora subsp. atroseptica).